The following is a 138-amino-acid chain: MGRIVAIDYGEKRTGFAISDPLKMIVSSFVTVLSRKAVMYLKNCTENYDIELFVLGEPRQMDYTPSENMPRVEKFKRNLRRVIPSIDVQMVDERFTSVLAHRIMIEGGVKKIKRQDKGLVDRLSAAILLQTYLEFLRK.

Belongs to the YqgF nuclease family.

The protein resides in the cytoplasm. Functionally, could be a nuclease involved in processing of the 5'-end of pre-16S rRNA. The polypeptide is Putative pre-16S rRNA nuclease (Azobacteroides pseudotrichonymphae genomovar. CFP2).